Reading from the N-terminus, the 305-residue chain is DNA-directed RNA polymerase 35 kDa subunit (305 aa).

It belongs to the poxviridae DNA-directed RNA polymerase 35 kDa subunit family. The DNA-dependent RNA polymerase used for intermediate and late genes expression consists of eight subunits 147 kDa, 133 kDa, 35 kDa, 30 kDa, 22 kDa, 19 kDa, 18 kDa and 7 kDa totalling more than 500 kDa in mass. The same holoenzyme, with the addition of the transcription-specificity factor RAP94, is used for early gene expression.

It is found in the virion. It carries out the reaction RNA(n) + a ribonucleoside 5'-triphosphate = RNA(n+1) + diphosphate. In terms of biological role, part of the DNA-dependent RNA polymerase which catalyzes the transcription of viral DNA into RNA using the four ribonucleoside triphosphates as substrates. Responsible for the transcription of early, intermediate and late genes. DNA-dependent RNA polymerase associates with the early transcription factor (ETF), itself composed of D6 and A7, thereby allowing the early genes transcription. Late transcription, and probably also intermediate transcription, require newly synthesized RNA polymerase. In Homo sapiens (Human), this protein is DNA-directed RNA polymerase 35 kDa subunit (OPG156).